The primary structure comprises 250 residues: tRNA (guanine-N(1)-)-methyltransferase (250 aa).

S-adenosyl-L-methionine-binding positions include glycine 116 and 136-141; that span reads IGDYVL.

The protein belongs to the RNA methyltransferase TrmD family. Homodimer.

The protein localises to the cytoplasm. It catalyses the reaction guanosine(37) in tRNA + S-adenosyl-L-methionine = N(1)-methylguanosine(37) in tRNA + S-adenosyl-L-homocysteine + H(+). Functionally, specifically methylates guanosine-37 in various tRNAs. This Pseudomonas entomophila (strain L48) protein is tRNA (guanine-N(1)-)-methyltransferase.